Here is a 1011-residue protein sequence, read N- to C-terminus: Protein argonaute 1C (1011 aa).

Positions 1-11 are enriched in basic residues; sequence MASRRPTHRHH. Disordered stretches follow at residues 1–95 and 107–147; these read MASR…SPLA and RPSE…PLRP. Low complexity-rich tracts occupy residues 28–53 and 61–92; these read ARYA…ARGA and QQQQ…ASSS. The span at 127–140 shows a compositional bias: polar residues; sequence ATTTPHHIPSSSKS. Positions 352 to 462 constitute a PAZ domain; it reads PVIDFVAQLL…LPMEVCKIVE (111 aa). Residues 638 to 959 enclose the Piwi domain; it reads LLIGILPDNN…AAFRARFYME (322 aa). The span at 963 to 982 shows a compositional bias: low complexity; the sequence is SDSSSVVSGPGVRGPLSGSS. The disordered stretch occupies residues 963 to 994; that stretch reads SDSSSVVSGPGVRGPLSGSSTSRTRAPGGAAV.

It belongs to the argonaute family. Ago subfamily.

Its function is as follows. Probably involved in the RNA silencing pathway. May bind to short RNAs such as microRNAs (miRNAs) or short interfering RNAs (siRNAs), and represses the translation of mRNAs which are complementary to them. This chain is Protein argonaute 1C (AGO1C), found in Oryza sativa subsp. japonica (Rice).